An 80-amino-acid polypeptide reads, in one-letter code: Centromere protein X (80 aa).

The protein belongs to the CENP-X/MHF2 family. In terms of assembly, heterodimer with CENPX, sometimes called MHF; this interaction stabilizes both partners. MHF heterodimers can assemble to form tetrameric structures. MHF also coassemble with CENPT-CENPW heterodimers at centromeres to form the tetrameric CENP-T-W-S-X complex. Forms a discrete complex with FANCM and CENPX, called FANCM-MHF; this interaction, probably mediated by direct binding between CENPS and FANCM, leads to synergistic activation of double-stranded DNA binding and strongly stimulates FANCM-mediated DNA remodeling. Recruited by FANCM to the Fanconi anemia (FA) core complex, which consists of CENPS, CENPX, FANCA, FANCB, FANCC, FANCE, FANCF, FANCG, FANCL, FANCM, FAAP24 and FAAP100. The FA core complex associates with Bloom syndrome (BLM) complex, which consists of at least BLM, DNA topoisomerase 3-alpha (TOP3A), RMI1/BLAP75, RPA1/RPA70 and RPA2/RPA32. The super complex between FA and BLM is called BRAFT.

Its subcellular location is the nucleus. The protein localises to the chromosome. The protein resides in the centromere. It is found in the kinetochore. Its function is as follows. DNA-binding component of the Fanconi anemia (FA) core complex. Required for the normal activation of the FA pathway, leading to monoubiquitination of the FANCI-FANCD2 complex in response to DNA damage, cellular resistance to DNA cross-linking drugs, and prevention of chromosomal breakage. In complex with CENPS (MHF heterodimer), crucial cofactor for FANCM in both binding and ATP-dependent remodeling of DNA. Stabilizes FANCM. In complex with CENPS and FANCM (but not other FANC proteins), rapidly recruited to blocked forks and promotes gene conversion at blocked replication forks. In complex with CENPS, CENPT and CENPW (CENP-T-W-S-X heterotetramer), involved in the formation of a functional kinetochore outer plate, which is essential for kinetochore-microtubule attachment and faithful mitotic progression. As a component of MHF and CENP-T-W-S-X complexes, binds DNA and bends it to form a nucleosome-like structure. DNA-binding function is fulfilled in the presence of CENPS, with the following preference for DNA substates: Holliday junction &gt; double-stranded &gt; splay arm &gt; single-stranded. Does not bind DNA on its own. The chain is Centromere protein X (CENPX) from Gallus gallus (Chicken).